We begin with the raw amino-acid sequence, 117 residues long: Small ribosomal subunit protein bS6m (117 aa).

This sequence belongs to the bacterial ribosomal protein bS6 family. Component of the mitochondrial small ribosomal subunit (mt-SSU). Mature N.crassa 74S mitochondrial ribosomes consist of a small (37S) and a large (54S) subunit. The 37S small subunit contains a 16S ribosomal RNA (16S mt-rRNA) and 32 different proteins. The 54S large subunit contains a 23S rRNA (23S mt-rRNA) and 42 different proteins.

The protein localises to the mitochondrion. Its function is as follows. Component of the mitochondrial ribosome (mitoribosome), a dedicated translation machinery responsible for the synthesis of mitochondrial genome-encoded proteins, including at least some of the essential transmembrane subunits of the mitochondrial respiratory chain. The mitoribosomes are attached to the mitochondrial inner membrane and translation products are cotranslationally integrated into the membrane. The sequence is that of Small ribosomal subunit protein bS6m (mrp17) from Neurospora crassa (strain ATCC 24698 / 74-OR23-1A / CBS 708.71 / DSM 1257 / FGSC 987).